An 80-amino-acid polypeptide reads, in one-letter code: Exodeoxyribonuclease 7 small subunit (80 aa).

It belongs to the XseB family. In terms of assembly, heterooligomer composed of large and small subunits.

It localises to the cytoplasm. It carries out the reaction Exonucleolytic cleavage in either 5'- to 3'- or 3'- to 5'-direction to yield nucleoside 5'-phosphates.. Its function is as follows. Bidirectionally degrades single-stranded DNA into large acid-insoluble oligonucleotides, which are then degraded further into small acid-soluble oligonucleotides. This chain is Exodeoxyribonuclease 7 small subunit, found in Rickettsia felis (strain ATCC VR-1525 / URRWXCal2) (Rickettsia azadi).